A 229-amino-acid polypeptide reads, in one-letter code: (S)-2-haloacid dehalogenase 2 (229 aa).

Aspartate 10 serves as the catalytic Nucleophile. An (S)-2-haloacid-binding positions include 11–12, arginine 41, and 118–119; these read LY and SN. The interval 175–180 is important for catalytic activity; the sequence is SSNAWD.

It belongs to the HAD-like hydrolase superfamily. S-2-haloalkanoic acid dehalogenase family.

The enzyme catalyses an (S)-2-haloacid + H2O = a (2R)-2-hydroxycarboxylate + a halide anion + H(+). It carries out the reaction (S)-2-chloropropanoate + H2O = (R)-lactate + chloride + H(+). Functionally, catalyzes the hydrolytic dehalogenation of small (S)-2-haloalkanoic acids to yield the corresponding (R)-2-hydroxyalkanoic acids. Acts on acids of short chain lengths, C(2) to C(4), with inversion of configuration at C-2. Active with 2-halogenated carboxylic acids and converts only the S-isomer (or L-isomer) of 2-chloropropionic acid with inversion of configuration to produce R-lactate (or D-isomer). This Pseudomonas sp. (strain CBS-3) protein is (S)-2-haloacid dehalogenase 2.